A 164-amino-acid polypeptide reads, in one-letter code: Protein-export protein SecB (164 aa).

The protein belongs to the SecB family. Homotetramer, a dimer of dimers. One homotetramer interacts with 1 SecA dimer.

It localises to the cytoplasm. Its function is as follows. One of the proteins required for the normal export of preproteins out of the cell cytoplasm. It is a molecular chaperone that binds to a subset of precursor proteins, maintaining them in a translocation-competent state. It also specifically binds to its receptor SecA. The sequence is that of Protein-export protein SecB from Stutzerimonas stutzeri (strain A1501) (Pseudomonas stutzeri).